Reading from the N-terminus, the 246-residue chain is uncharacterized protein (246 aa).

A run of 6 helical transmembrane segments spans residues 7–27 (KVTLVSLILMAVFQFFMALII), 50–70 (LNILLQALTIVIAATIVSMEF), 99–119 (VSFYLYLAYYILALLFGLLFF), 135–155 (LALIGSNWLEAVMMGLFGLLC), 163–183 (AVAVVVSFVVLYGASTLVQLM), and 219–239 (FSIGILIIHAIFFIVVGWWCF).

It localises to the cell membrane. This is an uncharacterized protein from Bacillus subtilis (strain 168).